Reading from the N-terminus, the 384-residue chain is MVPELIAETAVTHFSDVYRPVQVVHKMIDKLKRKRDHSVKDVPQLQMANLSDNPTAQIIRAPKRTKLDAMLEGIMRVGDDMYDHAQPDNFSPLALIPVVNEKGHSPLSLIDLHAANEASNGLITGSGYAHTPYQADLADAHIIKIQQGTAYYEIDSQLMAQEFGDKSFGAFADEAYASERGYAIRTNPHTGNKEMFVAGTRNGWDWASNALEVTGASHILNNPVHSGVRAGEVGYMYATGNPVPPEYLGLAEKVADTIETPNGRIATPWRAKAQEFYSQVVVDEEVDVVYGHSRGGAIVADMQLPAAVTKIGLDSAMILADNKGMINFYQGGRGFDPGHPIAWFKSQVDMALGSTGENNIHLEVEGMHTHELWNHDSEDYMLEP.

The polypeptide is Viral protein 1 (Chaetoceros setoense (Chaetoceros setoense DNA virus)).